Reading from the N-terminus, the 223-residue chain is Serum amyloid P-component (223 aa).

The first 19 residues, 1-19 (MNKPLLWISVLTSLLEAFA), serve as a signal peptide directing secretion. Positions 24–223 (SGKVFVFPRE…YVIIKPLVWV (200 aa)) constitute a Pentraxin (PTX) domain. Asparagine 51 carries N-linked (GlcNAc...) asparagine glycosylation. A disulfide bridge links cysteine 55 with cysteine 114. Positions 77, 78, 155, 156, 157, and 167 each coordinate Ca(2+).

This sequence belongs to the pentraxin family. Homopentamer. Pentraxin (or pentaxin) have a discoid arrangement of 5 non-covalently bound subunits. Ca(2+) serves as cofactor. Post-translationally, N-glycosylated with a complex biantennary oligosaccharide chain with a sialic acid at the end (disialo-SAP). Monosialo-SAP as well as asioalo-SAP are also detected. Found in serum and urine.

It localises to the secreted. Functionally, can interact with DNA and histones and may scavenge nuclear material released from damaged circulating cells. May also function as a calcium-dependent lectin. In Homo sapiens (Human), this protein is Serum amyloid P-component (APCS).